Here is a 696-residue protein sequence, read N- to C-terminus: Probable glutamine--fructose-6-phosphate aminotransferase [isomerizing] (696 aa).

Residue Cys2 is the For GATase activity of the active site. Positions 2-303 (CGIFGYINYL…DDDIAHVRDG (302 aa)) constitute a Glutamine amidotransferase type-2 domain. 2 consecutive SIS domains span residues 375–514 (YYDI…DSVS) and 547–686 (AIEQ…VDQP).

It catalyses the reaction D-fructose 6-phosphate + L-glutamine = D-glucosamine 6-phosphate + L-glutamate. The protein operates within nucleotide-sugar biosynthesis; UDP-N-acetyl-alpha-D-glucosamine biosynthesis; alpha-D-glucosamine 6-phosphate from D-fructose 6-phosphate: step 1/1. Involved in amino sugar synthesis (formation of chitin, supplies the amino sugars of asparagine-linked oligosaccharides of glycoproteins). The sequence is that of Probable glutamine--fructose-6-phosphate aminotransferase [isomerizing] from Schizosaccharomyces pombe (strain 972 / ATCC 24843) (Fission yeast).